A 362-amino-acid chain; its full sequence is Hydroxycarboxylate dehydrogenase A (362 aa).

Residues D173, H257, and H274 each coordinate Zn(2+).

This sequence belongs to the iron-containing alcohol dehydrogenase family. It depends on Zn(2+) as a cofactor.

The enzyme catalyses 2-hydroxybutanoate + NADP(+) = 2-oxobutanoate + NADPH + H(+). It carries out the reaction 2-hydroxyglutarate + NADP(+) = 2-oxoglutarate + NADPH + H(+). In terms of biological role, catalyzes the NADPH-dependent reduction of 2-oxoglutarate and 2-oxobutanoate, leading to the respective 2-hydroxycarboxylate. Cannot use NADH instead of NADPH as a redox partner. Do not catalyze the reverse reactions. In Escherichia coli (strain K12), this protein is Hydroxycarboxylate dehydrogenase A.